Here is a 95-residue protein sequence, read N- to C-terminus: Large ribosomal subunit protein uL23 (95 aa).

It belongs to the universal ribosomal protein uL23 family. In terms of assembly, part of the 50S ribosomal subunit. Contacts protein L29, and trigger factor when it is bound to the ribosome.

Its function is as follows. One of the early assembly proteins it binds 23S rRNA. One of the proteins that surrounds the polypeptide exit tunnel on the outside of the ribosome. Forms the main docking site for trigger factor binding to the ribosome. The chain is Large ribosomal subunit protein uL23 from Geobacillus kaustophilus (strain HTA426).